Here is a 98-residue protein sequence, read N- to C-terminus: Gas vesicle protein A (98 aa).

Belongs to the gas vesicle GvpA family. The gas vesicle shell is 2 nm thick and consists of a single layer of this protein. It forms helical ribs nearly perpendicular to the long axis of the vesicle.

The protein resides in the gas vesicle shell. Gas vesicles are hollow, gas filled proteinaceous nanostructures found in some microorganisms. During planktonic growth they allow positioning of the organism at a favorable depth for light or nutrient acquisition. GvpA forms the protein shell. The protein is Gas vesicle protein A of Koribacter versatilis (strain Ellin345).